A 1785-amino-acid polypeptide reads, in one-letter code: Plexin-2 (1785 aa).

Residues methionine 1–alanine 17 form the signal peptide. The Sema domain occupies valine 18–leucine 444. The Extracellular segment spans residues valine 18–serine 1139. Asparagine 66 carries N-linked (GlcNAc...) asparagine glycosylation. Disulfide bonds link cysteine 84-cysteine 91, cysteine 118-cysteine 126, cysteine 247-cysteine 349, cysteine 263-cysteine 300, cysteine 318-cysteine 336, cysteine 447-cysteine 464, cysteine 453-cysteine 487, cysteine 456-cysteine 473, and cysteine 467-cysteine 479. Residue asparagine 249 is glycosylated (N-linked (GlcNAc...) asparagine). The 43-residue stretch at threonine 446–proline 488 folds into the PSI 1 domain. Residues asparagine 502, asparagine 536, and asparagine 572 are each glycosylated (N-linked (GlcNAc...) asparagine). A disulfide bridge connects residues cysteine 524 and cysteine 544. Positions aspartate 577 to valine 617 constitute a PSI 2 domain. 2 N-linked (GlcNAc...) asparagine glycosylation sites follow: asparagine 679 and asparagine 702. The 42-residue stretch at serine 707–aspartate 748 folds into the PSI 3 domain. IPT/TIG domains are found at residues proline 750–phenylalanine 837, threonine 840–tyrosine 924, and proline 928–phenylalanine 1040. Residues asparagine 864, asparagine 886, asparagine 984, and asparagine 1016 are each glycosylated (N-linked (GlcNAc...) asparagine). Residues leucine 1140 to phenylalanine 1160 form a helical membrane-spanning segment. Residues valine 1159–glutamine 1197 are a coiled coil. The Cytoplasmic portion of the chain corresponds to lysine 1161–glutamate 1785.

This sequence belongs to the plexin family. As to quaternary structure, interacts with mab-20. As to expression, expressed predominantly in the central nervous system from embryonic to adult stages. Expressed in early embryos in ventral neuroblasts. Expressed in neurons and in a subset of posterior lateral and ventral epidermal cells following epidermal enclosure. Present in neurons, muscles and weakly expressed in epidermal cells of the larval tail.

The protein resides in the cell membrane. Involved as a receptor for mab-20/sema-2a in the formation or stabilization of cell-cell contacts at several stages of epithelial morphogenesis. In early embryonic development, required for proper ventral closure of the epidermis. During male tail morphogenesis, involved in precursor cell sorting and in the formation of distinct sensory rays. Involved in axon guidance of SDQL neurons during neurogenesis. Probably in response to stimulation by mab-20, regulates fln-1-mediated remodeling of the actin cytoskeleton and thus axon guidance and/or fasciculation of DD/VD neurons. The protein is Plexin-2 of Caenorhabditis elegans.